Consider the following 151-residue polypeptide: Large ribosomal subunit protein uL15 (151 aa).

Belongs to the universal ribosomal protein uL15 family. Part of the 50S ribosomal subunit.

Functionally, binds to the 23S rRNA. This chain is Large ribosomal subunit protein uL15, found in Hyperthermus butylicus (strain DSM 5456 / JCM 9403 / PLM1-5).